Reading from the N-terminus, the 129-residue chain is Tumor necrosis factor receptor superfamily member 12A (129 aa).

The first 27 residues, 1-27 (MASAWPRSLPQILVLGFGLVLMRAAAG), serve as a signal peptide directing secretion. Over 28 to 80 (EQAPGTSPCSSGSSWSADLDKCMDCASCPARPHSDFCLGCAAAPPAHFRLLWP) the chain is Extracellular. Intrachain disulfides connect cysteine 36–cysteine 49, cysteine 52–cysteine 67, and cysteine 55–cysteine 64. A TNFR-Cys; atypical repeat occupies 36 to 67 (CSSGSSWSADLDKCMDCASCPARPHSDFCLGC). A helical membrane pass occupies residues 81–101 (ILGGALSLVLVLALVSSFLVW). Residues 102–129 (RRCRRREKFTTPIEETGGEGCPGVALIQ) are Cytoplasmic-facing.

Associates with TRAF1 and TRAF2, and probably also with TRAF3. Highly expressed in fetal heart, intestine, kidney, liver, lung and skin, and in adult heart and ovary. Intermediate expression in adult kidney, lung and skin.

The protein resides in the membrane. Functionally, receptor for TNFSF12/TWEAK. Weak inducer of apoptosis in some cell types. Promotes angiogenesis and the proliferation of endothelial cells. May modulate cellular adhesion to matrix proteins. The chain is Tumor necrosis factor receptor superfamily member 12A (Tnfrsf12a) from Mus musculus (Mouse).